Reading from the N-terminus, the 709-residue chain is MLRINQRLLVRSLRDAQYQYLKSTALRFLSSSTQSNVETTPRRSGRLFELNKEYTGKLAQPDGKANIESLYNEFKNDLDKISEFSNGRQGMAPKYGRSRSLSFINRLFQSITNAKNTSSLDPYVVLEQLSKYNLIGPAQYEMILRYYLLVKDAPKDVISLWVKYLEQFTTSNENLMAYTTIAYLKLPDMNEPDCSMLQQILQTERFHTDIPFGRIISIVEQNEVLKRDQELSNRFAYLLNLYATQNKTWFINQLDICYTESRLRSFYNIYSAQRDINNCDIEIITKFMEQFNKLNANSSFPMQVFNEYKDKLSDADGFKLKLGLLDIVSKYPAPSKIQKLQRLLAVWNSYLKPEFGKVGIDASLAYASLIKALNTSGNIEELQNIWEKEIPTEYKNNQVVFEAFLLAIIRRTKITYSQIQNRIDATKFGKLKSVDLAEAIALKIFNENPNDSKVFDDFYQQNSLDSFGSNTSILALKTYGDYIYKTKTDDETYVIANDVRSKVLKLKPQISTQSWKQEVNLILEKFIDIAPSIIPVRVLFEQRGIYQLNFTLQKKILFSEFRKPDGDVQNAEKIFEELMKTDNNKVSQPMRINSPQLMGTMIKGLCQVIGRTHDVSLYPELSKYLEMLPGLEVHMSINWMEQVLRTIRMVFRSGSTKTIPKELLEFSEFIIEKLPAIDPDFNYQFRNDDIAMFKKIGAKSFSKLKSTST.

Residues 1–29 (MLRINQRLLVRSLRDAQYQYLKSTALRFL) constitute a mitochondrion transit peptide.

It is found in the mitochondrion. In terms of biological role, may be involved in the control of meiotic sister-chromatid recombination. This is Meiotic sister-chromatid recombination protein 6, mitochondrial (MSC6) from Candida glabrata (strain ATCC 2001 / BCRC 20586 / JCM 3761 / NBRC 0622 / NRRL Y-65 / CBS 138) (Yeast).